The following is a 179-amino-acid chain: UPF0227 protein Sbal195_2522 (179 aa).

Belongs to the UPF0227 family.

This chain is UPF0227 protein Sbal195_2522, found in Shewanella baltica (strain OS195).